The sequence spans 226 residues: Cytidylate kinase (226 aa).

10–18 contributes to the ATP binding site; the sequence is GPASSGKST.

Belongs to the cytidylate kinase family. Type 1 subfamily.

The protein resides in the cytoplasm. It carries out the reaction CMP + ATP = CDP + ADP. The enzyme catalyses dCMP + ATP = dCDP + ADP. The chain is Cytidylate kinase from Streptococcus uberis (strain ATCC BAA-854 / 0140J).